The primary structure comprises 84 residues: Small ribosomal subunit protein eS27 (84 aa).

A C4-type zinc finger spans residues 38–60 (CPKCGATTTTFSHAHRQILCQKC).

The protein belongs to the eukaryotic ribosomal protein eS27 family. Component of the small ribosomal subunit. The cofactor is Zn(2+).

The protein localises to the cytoplasm. Functionally, component of the small ribosomal subunit. The ribosome is a large ribonucleoprotein complex responsible for the synthesis of proteins in the cell. Required for proper rRNA processing and maturation of 18S rRNAs. The sequence is that of Small ribosomal subunit protein eS27 (RPS27) from Entamoeba histolytica (strain ATCC 30459 / HM-1:IMSS / ABRM).